Consider the following 301-residue polypeptide: Ribonuclease Z (301 aa).

Residues His-60, His-62, Asp-64, His-65, His-137, Asp-207, and His-265 each coordinate Zn(2+). Asp-64 functions as the Proton acceptor in the catalytic mechanism.

It belongs to the RNase Z family. As to quaternary structure, homodimer. Zn(2+) serves as cofactor.

It carries out the reaction Endonucleolytic cleavage of RNA, removing extra 3' nucleotides from tRNA precursor, generating 3' termini of tRNAs. A 3'-hydroxy group is left at the tRNA terminus and a 5'-phosphoryl group is left at the trailer molecule.. Its function is as follows. Zinc phosphodiesterase, which displays some tRNA 3'-processing endonuclease activity. Probably involved in tRNA maturation, by removing a 3'-trailer from precursor tRNA. The protein is Ribonuclease Z of Exiguobacterium sibiricum (strain DSM 17290 / CCUG 55495 / CIP 109462 / JCM 13490 / 255-15).